The chain runs to 81 residues: Toxin F-VIII (81 aa).

The signal sequence occupies residues 1 to 21 (MKTLLLTLLVVTIVCLDLAST). 4 disulfides stabilise this stretch: C24–C43, C38–C60, C62–C73, and C74–C79.

Belongs to the three-finger toxin family. Short-chain subfamily. Orphan group XI sub-subfamily. In terms of tissue distribution, expressed by the venom gland.

The protein localises to the secreted. Is cytotoxic against A549 cells (LC(50)=106 ug/ml). The chain is Toxin F-VIII from Dendroaspis angusticeps (Eastern green mamba).